An 864-amino-acid polypeptide reads, in one-letter code: Microtubule-associated protein TORTIFOLIA1 (864 aa).

Positions 1–26 are disordered; that stretch reads MSTPTTSGSAAKPTRPARSSSLATRS. A compositionally biased stretch (polar residues) spans 17–26; that stretch reads ARSSSLATRS. HEAT repeat units follow at residues 76–113, 117–154, 167–204, 208–245, and 248–285; these read ETLP…LHCD, AHLT…IYLK, LAVG…SAAS, TSFQ…VGAI, and QSLE…HSSG. The segment at 329–353 is disordered; that stretch reads DGASDDSKLSASEQLGSEKNGEKRS. Position 414 is a phosphoserine (Ser414). Residues 426–504 are disordered; it reads NDEEESGLDD…QSEGSFTSNR (79 aa). Over residues 439 to 448 the composition is skewed to polar residues; it reads MGSSNRLKNT. The span at 449-459 shows a compositional bias: basic and acidic residues; the sequence is QADDKQVKGRF. Residues 489–504 are compositionally biased toward polar residues; that stretch reads VSNTDNQSEGSFTSNR. Positions 508 to 561 form a coiled coil; the sequence is SAIQRQLLQLERQQTNLMNMLQEFIGGSHDSMVTLEGRVRGLERIVEDMARDLS. Residues 615 to 670 are disordered; sequence DDWFIPPHAASRNGQAGPRRSPRSEQYENEHMGNGRRGWDNKASGTIRFGEGPSAR. The segment covering 636-654 has biased composition (basic and acidic residues); it reads PRSEQYENEHMGNGRRGWD.

In terms of assembly, interacts with WAV3. As to expression, expressed in roots, hypocotyls, stems, flowers, siliques, inflorescences, petioles, cotyledons, and leaves. Particularly present in root tips and shoot meristems.

It is found in the cytoplasm. It localises to the cytoskeleton. Plant-specific microtubule-associated protein (MAP) that regulates the orientation of cortical microtubules and the direction of organ growth. Determines microtubule organization by modulating microtubule severing. The sequence is that of Microtubule-associated protein TORTIFOLIA1 from Arabidopsis thaliana (Mouse-ear cress).